A 91-amino-acid chain; its full sequence is UPF0250 protein BB0170 (91 aa).

This sequence belongs to the UPF0250 family.

The polypeptide is UPF0250 protein BB0170 (Bordetella bronchiseptica (strain ATCC BAA-588 / NCTC 13252 / RB50) (Alcaligenes bronchisepticus)).